The following is a 201-amino-acid chain: Large ribosomal subunit protein uL4 (201 aa).

Positions 44–71 are disordered; the sequence is RAQKTRAEVTGSGKKPWRQKGTGRARSG.

It belongs to the universal ribosomal protein uL4 family. As to quaternary structure, part of the 50S ribosomal subunit.

Functionally, one of the primary rRNA binding proteins, this protein initially binds near the 5'-end of the 23S rRNA. It is important during the early stages of 50S assembly. It makes multiple contacts with different domains of the 23S rRNA in the assembled 50S subunit and ribosome. Its function is as follows. Forms part of the polypeptide exit tunnel. The polypeptide is Large ribosomal subunit protein uL4 (Enterobacter sp. (strain 638)).